We begin with the raw amino-acid sequence, 335 residues long: Phosphatidylglycerol--prolipoprotein diacylglyceryl transferase (335 aa).

The next 3 helical transmembrane spans lie at 31 to 51, 67 to 87, and 100 to 120; these read IYWYGIIFVCGFLLAILTYSL, YIFLAIPMTIIGARLWSLAIG, and LAIQGGVIAGVLSAAIYFPLI. Arg163 is an a 1,2-diacyl-sn-glycero-3-phospho-(1'-sn-glycerol) binding site. Transmembrane regions (helical) follow at residues 213–233, 235–255, and 277–297; these read PLFLYESFFNVIVFVFIYFGL, YIKQLKIGFVSMSYFFFYGVI, and SLLLIFGVLGALYVQFIAPIL.

This sequence belongs to the Lgt family.

It is found in the cell membrane. The catalysed reaction is L-cysteinyl-[prolipoprotein] + a 1,2-diacyl-sn-glycero-3-phospho-(1'-sn-glycerol) = an S-1,2-diacyl-sn-glyceryl-L-cysteinyl-[prolipoprotein] + sn-glycerol 1-phosphate + H(+). It participates in protein modification; lipoprotein biosynthesis (diacylglyceryl transfer). Catalyzes the transfer of the diacylglyceryl group from phosphatidylglycerol to the sulfhydryl group of the N-terminal cysteine of a prolipoprotein, the first step in the formation of mature lipoproteins. In Ureaplasma urealyticum serovar 10 (strain ATCC 33699 / Western), this protein is Phosphatidylglycerol--prolipoprotein diacylglyceryl transferase.